We begin with the raw amino-acid sequence, 521 residues long: Protein nucleotidyltransferase YdiU (521 aa).

Residues glycine 109, glycine 111, arginine 112, lysine 131, aspartate 143, glycine 144, arginine 194, and arginine 201 each coordinate ATP. Residue aspartate 270 is the Proton acceptor of the active site. Residues asparagine 271 and aspartate 280 each coordinate Mg(2+). An ATP-binding site is contributed by aspartate 280.

The protein belongs to the SELO family. Requires Mg(2+) as cofactor. Mn(2+) serves as cofactor.

It carries out the reaction L-seryl-[protein] + ATP = 3-O-(5'-adenylyl)-L-seryl-[protein] + diphosphate. The enzyme catalyses L-threonyl-[protein] + ATP = 3-O-(5'-adenylyl)-L-threonyl-[protein] + diphosphate. The catalysed reaction is L-tyrosyl-[protein] + ATP = O-(5'-adenylyl)-L-tyrosyl-[protein] + diphosphate. It catalyses the reaction L-histidyl-[protein] + UTP = N(tele)-(5'-uridylyl)-L-histidyl-[protein] + diphosphate. It carries out the reaction L-seryl-[protein] + UTP = O-(5'-uridylyl)-L-seryl-[protein] + diphosphate. The enzyme catalyses L-tyrosyl-[protein] + UTP = O-(5'-uridylyl)-L-tyrosyl-[protein] + diphosphate. Functionally, nucleotidyltransferase involved in the post-translational modification of proteins. It can catalyze the addition of adenosine monophosphate (AMP) or uridine monophosphate (UMP) to a protein, resulting in modifications known as AMPylation and UMPylation. In Burkholderia thailandensis (strain ATCC 700388 / DSM 13276 / CCUG 48851 / CIP 106301 / E264), this protein is Protein nucleotidyltransferase YdiU.